We begin with the raw amino-acid sequence, 313 residues long: Cytosolic Fe-S cluster assembly factor NUBP1 homolog (313 aa).

A disordered region spans residues 1–25; it reads MSDVPEDANAGCPGTGSAGAGKASG. [4Fe-4S] cluster-binding residues include Cys12, Cys26, Cys29, and Cys35. 66-73 contributes to the ATP binding site; sequence GKGGVGKS. [4Fe-4S] cluster contacts are provided by Cys240 and Cys243.

It belongs to the Mrp/NBP35 ATP-binding proteins family. NUBP1/NBP35 subfamily. As to quaternary structure, heterotetramer of 2 NUBP1 and 2 NUBP2 chains. It depends on [4Fe-4S] cluster as a cofactor.

It is found in the cytoplasm. The protein resides in the cell projection. In terms of biological role, component of the cytosolic iron-sulfur (Fe/S) protein assembly (CIA) machinery. Required for maturation of extramitochondrial Fe-S proteins. The NUBP1-NUBP2 heterotetramer forms a Fe-S scaffold complex, mediating the de novo assembly of an Fe-S cluster and its transfer to target apoproteins. Regulates cilium formation and structure. This chain is Cytosolic Fe-S cluster assembly factor NUBP1 homolog, found in Caenorhabditis briggsae.